Here is a 262-residue protein sequence, read N- to C-terminus: Protein crossbronx-like (262 aa).

Positions 15–179 constitute a UBC core domain; that stretch reads RQGYQVLAEY…VQELALFTKK (165 aa).

The protein belongs to the ubiquitin-conjugating enzyme family. FTS subfamily.

The sequence is that of Protein crossbronx-like from Drosophila pseudoobscura pseudoobscura (Fruit fly).